Reading from the N-terminus, the 519-residue chain is MTQADNQNPKPMVLIILDGFGESDETTHNAIKEANTPTLDKLFRHYPHTLLEASGRAVGLPDGQMGNSEVGHLHIGGGRKVPQDLTRIDAAIASGEFYENPALIEALEKAKALNKAVHILGLLSPGGVHSRDNQIAALVELAHRCGIKKIYLHAILDGRDTPPKSALLSIEKITDQFHAYGNGKIASLIGRYYAMDRDKRWDRTEKAYDLLTQGTAQFHAPTAKEGLMLAYEQGNTDEFVSPTSIHRHNETPITIEDGDVVVFMNFRADRARQLTYAFLDDHFTAFNRQVRPKLSAFVTLTAYAKDIHAAVAFPPLELHNTLGEYLSARGYRQLRIAETEKYAHVTYFLNGGQEAPFNGEDRLLIPSPKVATYDLQPEMSAVEMTNKLVEIIQNDDYDLIVCNFANPDMVGHTGDETATREAIQVIDDCLKRIITALQSVGGEALITADHGNAEKMFDEKTNQPHTAHTSNLVPLIYVGREAQFCKEVGALDDVAPTLLYLMGLEKPREMTGRNLITLK.

Mn(2+) is bound by residues D18 and S68. S68 functions as the Phosphoserine intermediate in the catalytic mechanism. Substrate-binding positions include H129, 159–160 (RD), R191, R197, 267–270 (RADR), and K341. Positions 408, 412, 449, 450, and 468 each coordinate Mn(2+).

The protein belongs to the BPG-independent phosphoglycerate mutase family. In terms of assembly, monomer. Mn(2+) is required as a cofactor.

The catalysed reaction is (2R)-2-phosphoglycerate = (2R)-3-phosphoglycerate. Its pathway is carbohydrate degradation; glycolysis; pyruvate from D-glyceraldehyde 3-phosphate: step 3/5. Its function is as follows. Catalyzes the interconversion of 2-phosphoglycerate and 3-phosphoglycerate. This is 2,3-bisphosphoglycerate-independent phosphoglycerate mutase from Coxiella burnetii (strain Dugway 5J108-111).